We begin with the raw amino-acid sequence, 215 residues long: CUE domain-containing protein 4, mitochondrial (215 aa).

A mitochondrion-targeting transit peptide spans 1-29; it reads MQPEQLAGCAVVLTVTVLTLRWMFRVDKG. Residues 48–90 enclose the CUE domain; the sequence is VNSEHVHLVKTVFPHLESSAIAYDLQKTKNVDATIENALRGQP. The interval 109 to 191 is disordered; the sequence is GAGASSHSEE…KEREELFRKR (83 aa). Low complexity-rich tracts occupy residues 122–140 and 153–165; these read SHEV…SLAS and SSRI…SSSS. Basic and acidic residues predominate over residues 180–191; that stretch reads SKKEREELFRKR.

The protein resides in the mitochondrion. The polypeptide is CUE domain-containing protein 4, mitochondrial (Schizosaccharomyces pombe (strain 972 / ATCC 24843) (Fission yeast)).